A 261-amino-acid polypeptide reads, in one-letter code: Kallikrein 1-related peptidase b8 (261 aa).

The N-terminal stretch at 1–18 (MRFLILFLALSLGGIDAA) is a signal peptide. Residues 19–24 (PPLQSR) constitute a propeptide, activation peptide. Residues 25-258 (VVGGFNCEKN…FNSWIKDTMT (234 aa)) enclose the Peptidase S1 domain. Cystine bridges form between C31-C173, C50-C66, C152-C219, C184-C198, and C209-C234. H65 acts as the Charge relay system in catalysis. The N-linked (GlcNAc...) asparagine glycan is linked to N102. Catalysis depends on D120, which acts as the Charge relay system. S213 serves as the catalytic Charge relay system.

The protein belongs to the peptidase S1 family. Kallikrein subfamily.

The enzyme catalyses Preferential cleavage of Arg-|-Xaa bonds in small molecule substrates. Highly selective action to release kallidin (lysyl-bradykinin) from kininogen involves hydrolysis of Met-|-Xaa or Leu-|-Xaa.. Functionally, glandular kallikreins cleave Met-Lys and Arg-Ser bonds in kininogen to release Lys-bradykinin. The chain is Kallikrein 1-related peptidase b8 (Klk1b8) from Mus musculus (Mouse).